The chain runs to 406 residues: Olfactomedin-like protein 3 (406 aa).

An N-terminal signal peptide occupies residues 1–21 (MGPSTPLLILFLLSWSGPLQG). Residues 25–101 (HLVEYMERRL…REVDYLETQN (77 aa)) are a coiled coil. One can recognise an Olfactomedin-like domain in the interval 134 to 401 (DCGYTISQVR…QIVYKLEMRK (268 aa)). Residues Cys-135 and Cys-328 are joined by a disulfide bond. Asn-177 and Asn-248 each carry an N-linked (GlcNAc...) asparagine glycan.

Belongs to the OLFML3 family. Abundant in placenta, moderate in liver and heart, whereas fairly weak in other tissues examined. On term placenta, mainly localized extracellularly surrounding the syncytiotrophoblastic cells and very rarely expressed in the maternal decidua layer.

Its subcellular location is the secreted. Secreted scaffold protein that plays an essential role in dorsoventral patterning during early development. Stabilizes axial formation by restricting chordin (CHRD) activity on the dorsal side. Acts by facilitating the association between the tolloid proteases and their substrate chordin (CHRD), leading to enhance chordin (CHRD) degradation. May have matrix-related function involved in placental and embryonic development, or play a similar role in other physiological processes. The sequence is that of Olfactomedin-like protein 3 (OLFML3) from Homo sapiens (Human).